We begin with the raw amino-acid sequence, 756 residues long: Multicystatin (756 aa).

8 consecutive Cystatin domains span residues Ile3–Thr96, Met97–Ala191, Lys192–Ala285, Lys286–Lys380, Lys381–Ala474, Lys475–Ala568, Ile569–Ala662, and Lys663–Lys756. Short sequence motifs (secondary area of contact) lie at residues Gln48 to Gly52, Gln142 to Gly146, Gln237 to Gly241, Gln331 to Gly335, Gln426 to Gly430, Gln520 to Gly524, Gln614 to Gly618, and Gln708 to Gly712.

It belongs to the cystatin family. Phytocystatin subfamily. Expressed abundantly in tuber and leaf.

Its function is as follows. Probably has a role in the plant's defense system. The chain is Multicystatin from Solanum tuberosum (Potato).